We begin with the raw amino-acid sequence, 908 residues long: Transferrin-binding protein A (908 aa).

Positions 1–24 (MQQQHLFRLNILCLSLMTALPVYA) are cleaved as a signal peptide. The TonB box signature appears at 38–45 (DTIQVKAK). One can recognise a TBDR plug domain in the interval 51–176 (RDNEVTGLGK…LAGSVAFQTK (126 aa)). In terms of domain architecture, TBDR beta-barrel spans 187-908 (QWGIQSKTAY…NYTFSLEMKF (722 aa)). Positions 891–908 (NRYAAPGRNYTFSLEMKF) match the TonB C-terminal box motif.

This sequence belongs to the TonB-dependent receptor family. As to quaternary structure, binds both human apo- and holo-transferrin (TF), via the TF C-terminus. Forms a large complex with TF and TbpB.

Its subcellular location is the cell outer membrane. In terms of biological role, neisseria acquires iron by extracting it from serum transferrin (TF) in its human host. Acts as a TF receptor and is required for TF utilization. Binds both apo- and holo-TF, via the TF C-terminus. The protein is Transferrin-binding protein A of Neisseria meningitidis serogroup B.